Reading from the N-terminus, the 482-residue chain is tRNA sulfurtransferase (482 aa).

The region spanning 61-165 (LAIRDALTRI…DDRLLLIKGR (105 aa)) is the THUMP domain. ATP is bound by residues 183 to 184 (LI), Lys-265, Gly-287, and Gln-296. Cysteines 344 and 456 form a disulfide. Residues 404–482 (FGPNDVILDI…GFENVKAYRP (79 aa)) form the Rhodanese domain. Residue Cys-456 is the Cysteine persulfide intermediate of the active site.

Belongs to the ThiI family.

The protein resides in the cytoplasm. The enzyme catalyses [ThiI sulfur-carrier protein]-S-sulfanyl-L-cysteine + a uridine in tRNA + 2 reduced [2Fe-2S]-[ferredoxin] + ATP + H(+) = [ThiI sulfur-carrier protein]-L-cysteine + a 4-thiouridine in tRNA + 2 oxidized [2Fe-2S]-[ferredoxin] + AMP + diphosphate. It carries out the reaction [ThiS sulfur-carrier protein]-C-terminal Gly-Gly-AMP + S-sulfanyl-L-cysteinyl-[cysteine desulfurase] + AH2 = [ThiS sulfur-carrier protein]-C-terminal-Gly-aminoethanethioate + L-cysteinyl-[cysteine desulfurase] + A + AMP + 2 H(+). The protein operates within cofactor biosynthesis; thiamine diphosphate biosynthesis. Its function is as follows. Catalyzes the ATP-dependent transfer of a sulfur to tRNA to produce 4-thiouridine in position 8 of tRNAs, which functions as a near-UV photosensor. Also catalyzes the transfer of sulfur to the sulfur carrier protein ThiS, forming ThiS-thiocarboxylate. This is a step in the synthesis of thiazole, in the thiamine biosynthesis pathway. The sulfur is donated as persulfide by IscS. The polypeptide is tRNA sulfurtransferase (Salmonella gallinarum (strain 287/91 / NCTC 13346)).